The sequence spans 404 residues: Formate-dependent phosphoribosylglycinamide formyltransferase (404 aa).

Residues 25-26 and Glu85 contribute to the N(1)-(5-phospho-beta-D-ribosyl)glycinamide site; that span reads EL. Residues Arg118, Lys159, 164–169, 199–202, and Glu207 contribute to the ATP site; these read SSGKGQ and EGFV. The ATP-grasp domain occupies 123 to 318; sequence RLAAEELGLP…EFELHARAIL (196 aa). The Mg(2+) site is built by Glu277 and Glu289. N(1)-(5-phospho-beta-D-ribosyl)glycinamide-binding positions include Asp296, Lys365, and 372 to 373; that span reads RR.

Belongs to the PurK/PurT family. In terms of assembly, homodimer.

The catalysed reaction is N(1)-(5-phospho-beta-D-ribosyl)glycinamide + formate + ATP = N(2)-formyl-N(1)-(5-phospho-beta-D-ribosyl)glycinamide + ADP + phosphate + H(+). The protein operates within purine metabolism; IMP biosynthesis via de novo pathway; N(2)-formyl-N(1)-(5-phospho-D-ribosyl)glycinamide from N(1)-(5-phospho-D-ribosyl)glycinamide (formate route): step 1/1. Functionally, involved in the de novo purine biosynthesis. Catalyzes the transfer of formate to 5-phospho-ribosyl-glycinamide (GAR), producing 5-phospho-ribosyl-N-formylglycinamide (FGAR). Formate is provided by PurU via hydrolysis of 10-formyl-tetrahydrofolate. This Burkholderia cenocepacia (strain HI2424) protein is Formate-dependent phosphoribosylglycinamide formyltransferase.